A 283-amino-acid polypeptide reads, in one-letter code: Undecaprenyl-diphosphatase (283 aa).

The next 7 membrane-spanning stretches (helical) occupy residues 46–66, 95–115, 127–147, 154–174, 200–220, 227–247, and 259–279; these read PGVS…IAYF, VAMV…KFFW, VPSI…AECM, LGGV…LAVI, FSFL…LKSA, AGPL…WLAI, and TWIF…WWAF.

This sequence belongs to the UppP family.

Its subcellular location is the cell inner membrane. The enzyme catalyses di-trans,octa-cis-undecaprenyl diphosphate + H2O = di-trans,octa-cis-undecaprenyl phosphate + phosphate + H(+). Its function is as follows. Catalyzes the dephosphorylation of undecaprenyl diphosphate (UPP). Confers resistance to bacitracin. The polypeptide is Undecaprenyl-diphosphatase (Synechococcus sp. (strain CC9902)).